The chain runs to 135 residues: BolA-like protein 1 (135 aa).

At Ser81 the chain carries Phosphoserine. Residues 114 to 135 (WKENPQLDTSPACLGGSKKSRN) form a disordered region.

Belongs to the BolA/IbaG family. In terms of assembly, interacts with GLRX5.

It is found in the mitochondrion. In terms of biological role, acts as a mitochondrial iron-sulfur (Fe-S) cluster assembly factor that facilitates (Fe-S) cluster insertion into a subset of mitochondrial proteins. Probably acts together with the monothiol glutaredoxin GLRX5. May protect cells against oxidative stress. This chain is BolA-like protein 1 (BOLA1), found in Bos taurus (Bovine).